The sequence spans 104 residues: MLFTDYMANFLVGYFSVLSSIMPLLAETSSTGEGLKLLGAGVAIIGVAGAGIGQGAVGQGACMAIGRNPEMAPKITSTMIIAAGIAESGAIYALVVAILLIFVA.

Transmembrane regions (helical) follow at residues 37–57 (LLGA…QGAV) and 83–103 (AGIA…LIFV).

The protein belongs to the ATPase C chain family. As to quaternary structure, F-type ATPases have 2 components, F(1) - the catalytic core - and F(0) - the membrane proton channel. F(1) has five subunits: alpha(3), beta(3), gamma(1), delta(1), epsilon(1). F(0) has three main subunits: a(1), b(2) and c(10-14). The alpha and beta chains form an alternating ring which encloses part of the gamma chain. F(1) is attached to F(0) by a central stalk formed by the gamma and epsilon chains, while a peripheral stalk is formed by the delta and b chains.

It is found in the cell membrane. In terms of biological role, f(1)F(0) ATP synthase produces ATP from ADP in the presence of a proton or sodium gradient. F-type ATPases consist of two structural domains, F(1) containing the extramembraneous catalytic core and F(0) containing the membrane proton channel, linked together by a central stalk and a peripheral stalk. During catalysis, ATP synthesis in the catalytic domain of F(1) is coupled via a rotary mechanism of the central stalk subunits to proton translocation. Key component of the F(0) channel; it plays a direct role in translocation across the membrane. A homomeric c-ring of between 10-14 subunits forms the central stalk rotor element with the F(1) delta and epsilon subunits. The protein is ATP synthase subunit c of Mesoplasma florum (strain ATCC 33453 / NBRC 100688 / NCTC 11704 / L1) (Acholeplasma florum).